The sequence spans 442 residues: Histidine--tRNA ligase (442 aa).

It belongs to the class-II aminoacyl-tRNA synthetase family. Homodimer.

It is found in the cytoplasm. The enzyme catalyses tRNA(His) + L-histidine + ATP = L-histidyl-tRNA(His) + AMP + diphosphate + H(+). This is Histidine--tRNA ligase from Psychrobacter arcticus (strain DSM 17307 / VKM B-2377 / 273-4).